A 311-amino-acid polypeptide reads, in one-letter code: Long form salivary protein D7L1 (311 aa).

Residues 1 to 21 (MIVTGVLLFILLELFAQGSQA) form the signal peptide. Cystine bridges form between C37–C73, C69–C128, C178–C211, and C252–C263.

This sequence belongs to the PBP/GOBP family.

It localises to the secreted. Functionally, modulates blood feeding of female mosquitoes on vertebrate species by binding and sequestering different mediators involved in the host response. Binds leukotriene C4 and U-46619, a stable analog of thromboxane A2. Inhibits agonist-induced platelet aggregation. Exhibits vasodilating activity. This Anopheles gambiae (African malaria mosquito) protein is Long form salivary protein D7L1.